Here is a 362-residue protein sequence, read N- to C-terminus: UPF0283 membrane protein Arad_2632 (362 aa).

Positions 1–11 (MTKPTEDDPKG) are enriched in basic and acidic residues. The interval 1-47 (MTKPTEDDPKGISRRPAAFSLEQEASREGAHTKTTAETPRRKPQSFD) is disordered. The next 2 helical transmembrane spans lie at 82–102 (FSFGKVALSAFGILVSLAFGL) and 118–138 (LGYTALTVLAIGILAVLAIVV).

Belongs to the UPF0283 family.

Its subcellular location is the cell inner membrane. This Rhizobium rhizogenes (strain K84 / ATCC BAA-868) (Agrobacterium radiobacter) protein is UPF0283 membrane protein Arad_2632.